Here is a 473-residue protein sequence, read N- to C-terminus: Vasculin-like protein 1 (473 aa).

A compositionally biased stretch (polar residues) spans 14–25; sequence STPQSSKSSTAT. The segment at 14–55 is disordered; it reads STPQSSKSSTATFDKHGEHLSRGEGRFGISRRRHNSSDGFFN. Positions 26–38 are enriched in basic and acidic residues; the sequence is FDKHGEHLSRGEG. 2 positions are modified to phosphoserine: Ser-49 and Ser-76. Disordered regions lie at residues 88-127 and 155-189; these read GTTG…RKGC and DFPS…AKQP. Over residues 103–112 the composition is skewed to polar residues; the sequence is SQRSGGSSTG. The segment covering 113 to 125 has biased composition (basic residues); sequence NHRHWNGSFHSRK. Ser-199 is subject to Phosphoserine. Disordered regions lie at residues 235 to 267 and 281 to 316; these read LVPK…SRES and LAAG…RRTT. Residue Ser-289 is modified to Phosphoserine. Positions 292–309 are enriched in low complexity; that stretch reads ESPSSTTPPIEISSSRLT. Phosphothreonine is present on Thr-298. Position 381 is a phosphoserine (Ser-381). Residues 453 to 473 are disordered; that stretch reads ECEDSDSETSSSQTSDDDAWK.

Belongs to the vasculin family.

The protein localises to the nucleus. Its function is as follows. Possible transcription factor. This is Vasculin-like protein 1 (Gpbp1l1) from Mus musculus (Mouse).